The sequence spans 413 residues: Acetate kinase (413 aa).

N7 contacts Mg(2+). An ATP-binding site is contributed by K14. Residue R98 participates in substrate binding. The active-site Proton donor/acceptor is D157. Residues 216 to 220 (HIGNG), 291 to 293 (DLR), and 339 to 343 (GVGEN) each bind ATP. E392 contributes to the Mg(2+) binding site.

The protein belongs to the acetokinase family. In terms of assembly, homodimer. Mg(2+) is required as a cofactor. It depends on Mn(2+) as a cofactor.

Its subcellular location is the cytoplasm. It carries out the reaction acetate + ATP = acetyl phosphate + ADP. The protein operates within metabolic intermediate biosynthesis; acetyl-CoA biosynthesis; acetyl-CoA from acetate: step 1/2. In terms of biological role, catalyzes the formation of acetyl phosphate from acetate and ATP. Can also catalyze the reverse reaction. The chain is Acetate kinase from Synechocystis sp. (strain ATCC 27184 / PCC 6803 / Kazusa).